The chain runs to 283 residues: Urease accessory protein UreD (283 aa).

It belongs to the UreD family. In terms of assembly, ureD, UreF and UreG form a complex that acts as a GTP-hydrolysis-dependent molecular chaperone, activating the urease apoprotein by helping to assemble the nickel containing metallocenter of UreC. The UreE protein probably delivers the nickel.

It is found in the cytoplasm. Required for maturation of urease via the functional incorporation of the urease nickel metallocenter. The chain is Urease accessory protein UreD from Acaryochloris marina (strain MBIC 11017).